The primary structure comprises 308 residues: tRNA pseudouridine synthase B (308 aa).

Asp-45 (nucleophile) is an active-site residue.

It belongs to the pseudouridine synthase TruB family. Type 1 subfamily.

The enzyme catalyses uridine(55) in tRNA = pseudouridine(55) in tRNA. Responsible for synthesis of pseudouridine from uracil-55 in the psi GC loop of transfer RNAs. The chain is tRNA pseudouridine synthase B from Gloeothece citriformis (strain PCC 7424) (Cyanothece sp. (strain PCC 7424)).